Consider the following 349-residue polypeptide: D-alanine--D-alanine ligase (349 aa).

The 203-residue stretch at 133–335 folds into the ATP-grasp domain; the sequence is QVLESATTIP…YSVLIEELVS (203 aa). Residue 163-218 coordinates ATP; sequence EEKLIYPVFVKPANMGSSVGISKAENRTDLKQAIALALKYDSRVLIEQGVDAREIE. Positions 289, 302, and 304 each coordinate Mg(2+).

Belongs to the D-alanine--D-alanine ligase family. It depends on Mg(2+) as a cofactor. Mn(2+) serves as cofactor.

It is found in the cytoplasm. It catalyses the reaction 2 D-alanine + ATP = D-alanyl-D-alanine + ADP + phosphate + H(+). It functions in the pathway cell wall biogenesis; peptidoglycan biosynthesis. Its function is as follows. Cell wall formation. The chain is D-alanine--D-alanine ligase from Streptococcus mutans serotype c (strain ATCC 700610 / UA159).